The chain runs to 410 residues: Mitochondrial potassium channel (410 aa).

A mitochondrion-targeting transit peptide spans 1-35 (MTGCSPVFTMQQVVGVSHRLVWRTFRGTDLLMTRT). The Mitochondrial matrix segment spans residues 36–201 (LCSPGPSRPG…KERTRAERTK (166 aa)). The stretch at 116-143 (VREAREDLEAQQTKLKEVRDRLDRVSRE) forms a coiled coil. The chain crosses the membrane as a helical span at residues 202 to 222 (NWSLIGSVLGALIGVAGSTYV). The Mitochondrial intermembrane portion of the chain corresponds to 223 to 385 (NRVRLQELKA…RLEAQANRNA (163 aa)). Residues 276 to 296 (GQDQGSGSPTGPSSPRGKDID) are disordered. The segment covering 280–290 (GSGSPTGPSSP) has biased composition (low complexity). Residues 386–406 (ISSTLVTCVTFMATLPLLYML) form a helical membrane-spanning segment. The Mitochondrial matrix segment spans residues 407 to 410 (FKTS).

The mitochondrial potassium channel (mitoK(ATP)) forms a heteromultimer.

It is found in the mitochondrion inner membrane. It catalyses the reaction K(+)(in) = K(+)(out). With respect to regulation, channel activity inhibited by ATP via ABCB8/MITOSUR subunit. Functionally, pore-forming subunit of the mitochondrial ATP-gated potassium channel (mitoK(ATP)). Together with ATP-binding subunit ABCB8/MITOSUR of the mitoK(ATP) channel, mediates ATP-dependent K(+) currents across the mitochondrial inner membrane. An increase in ATP intracellular levels closes the channel, inhibiting K(+) transport, whereas a decrease in ATP levels enhances K(+) uptake in the mitochondrial matrix. May contribute to the homeostatic control of cellular metabolism under stress conditions by regulating the mitochondrial matrix volume. This is Mitochondrial potassium channel from Rattus norvegicus (Rat).